The sequence spans 101 residues: Enhancer of yellow 2 transcription factor (101 aa).

Belongs to the ENY2 family. As to quaternary structure, component of the nuclear pore complex (NPC)-associated AMEX complex (anchoring and mRNA export complex), composed of at least e(y)2 and xmas-2. Component of the SAGA transcription coactivator-HAT complexes, at least composed of Ada2b, e(y)2, Pcaf/Gcn5, Taf10 and Nipped-A/Trrap. Within the SAGA complex, e(y)2, Sgf11, and not/nonstop form an additional subcomplex of SAGA called the DUB module (deubiquitination module). Component of the THO complex, composed of at least e(y)2, HPR1, THO2, THOC5, THOC6 and THOC7. Interacts with e(y)1. Interacts with su(Hw) (via zinc fingers). Interacts with xmas-2; required for localization to the nuclear periphery. Interacts with the nuclear pore complex (NPC).

The protein localises to the nucleus. Its subcellular location is the nucleoplasm. It is found in the cytoplasm. In terms of biological role, involved in mRNA export coupled transcription activation by association with both the AMEX and the SAGA complexes. The SAGA complex is a multiprotein complex that activates transcription by remodeling chromatin and mediating histone acetylation and deubiquitination. Within the SAGA complex, participates in a subcomplex that specifically deubiquitinates histone H2B. The SAGA complex is recruited to specific gene promoters by activators, where it is required for transcription. Required for nuclear receptor-mediated transactivation. Involved in transcription elongation by recruiting the THO complex onto nascent mRNA. The AMEX complex functions in docking export-competent ribonucleoprotein particles (mRNPs) to the nuclear entrance of the nuclear pore complex (nuclear basket). AMEX participates in mRNA export and accurate chromatin positioning in the nucleus by tethering genes to the nuclear periphery. The polypeptide is Enhancer of yellow 2 transcription factor (Drosophila erecta (Fruit fly)).